A 151-amino-acid polypeptide reads, in one-letter code: Myosin light polypeptide 6 (151 aa).

The residue at position 2 (Cys-2) is an N-acetylcysteine. One can recognise an EF-hand 1 domain in the interval 7–42 (DQTAEFKEAFQLFDRTGDGKILYSQCGDVMRALGQN). Position 57 is a phosphoserine (Ser-57). At Lys-81 the chain carries N6-acetyllysine. Residues 84 to 119 (GTYEDYVEGLRVFDKEGNGTVMGAEIRHVLVTLGEK) enclose the EF-hand 2 domain.

In terms of assembly, myosin is a hexamer of 2 heavy chains and 4 light chains. Interacts with SPATA6.

In terms of biological role, regulatory light chain of myosin. Does not bind calcium. The chain is Myosin light polypeptide 6 (MYL6) from Bos taurus (Bovine).